A 526-amino-acid polypeptide reads, in one-letter code: Butyrophilin subfamily 1 member A1 (526 aa).

The first 26 residues, 1-26, serve as a signal peptide directing secretion; that stretch reads MAVFPSSGLPRCLLTLILLQLPKLDS. Ig-like V-type domains are found at residues 27-138 and 148-234; these read APFD…ALVH and PHIS…VEIS. The Extracellular portion of the chain corresponds to 27-242; sequence APFDVIGPPE…ISIPASSLPR (216 aa). 2 cysteine pairs are disulfide-bonded: cysteine 50-cysteine 124 and cysteine 164-cysteine 218. N-linked (GlcNAc...) asparagine glycans are attached at residues asparagine 55 and asparagine 215. The helical transmembrane segment at 243–269 threads the bilayer; that stretch reads LTPWIVAVAVILMVLGLLTIGSIFFTW. Topologically, residues 270-526 are cytoplasmic; it reads RLYNERPRER…IPTQPSQGAP (257 aa). The region spanning 285-479 is the B30.2/SPRY domain; the sequence is SKERLLEELK…LTICPIADGP (195 aa). The interval 495–526 is disordered; that stretch reads IPLSPMGEDSAPRDADTLHSKLIPTQPSQGAP. A compositionally biased stretch (basic and acidic residues) spans 504 to 513; that stretch reads SAPRDADTLH. Over residues 517–526 the composition is skewed to polar residues; that stretch reads IPTQPSQGAP.

Belongs to the immunoglobulin superfamily. BTN/MOG family. As to quaternary structure, seems to associate with xanthine dehydrogenase/oxidase. N-glycosylated.

Its subcellular location is the membrane. The protein localises to the secreted. May function in the secretion of milk-fat droplets. May act as a specific membrane-associated receptor for the association of cytoplasmic droplets with the apical plasma membrane. Inhibits the proliferation of CD4 and CD8 T-cells activated by anti-CD3 antibodies, T-cell metabolism and IL2 and IFNG secretion. The sequence is that of Butyrophilin subfamily 1 member A1 (BTN1A1) from Homo sapiens (Human).